We begin with the raw amino-acid sequence, 187 residues long: MELQIGRVIKPHGVRGEVVVDPTTDTPELRFATGEVLKGKQAGKELSLTVRSFRPHQGRLLVTFEEIADRTAAESLRGVRFFAAPVHDEDDDGFYDHELEGLTAYLLAPGTDLKGDEIQLGDLVGEVVAVEHTPAGQLLVILIDAESQLPTAGKEVLVPFRHQIVPVVDLEEEILVLTPPEGLLELS.

The region spanning 91–183 (DDGFYDHELE…ILVLTPPEGL (93 aa)) is the PRC barrel domain.

The protein belongs to the RimM family. As to quaternary structure, binds ribosomal protein uS19.

Its subcellular location is the cytoplasm. In terms of biological role, an accessory protein needed during the final step in the assembly of 30S ribosomal subunit, possibly for assembly of the head region. Essential for efficient processing of 16S rRNA. May be needed both before and after RbfA during the maturation of 16S rRNA. It has affinity for free ribosomal 30S subunits but not for 70S ribosomes. The sequence is that of Ribosome maturation factor RimM from Corynebacterium jeikeium (strain K411).